Consider the following 177-residue polypeptide: Ribulose bisphosphate carboxylase small subunit, chloroplastic 2 (177 aa).

The N-terminal 56 residues, 1 to 56, are a transit peptide targeting the chloroplast; the sequence is MASSMMASTAAVARAGPAQSNMVAPFNGLRSSVAFPATRKANKNLSTLPSNGGKVS.

Belongs to the RuBisCO small chain family. In terms of assembly, heterohexadecamer of 8 large and 8 small subunits.

The protein resides in the plastid. It is found in the chloroplast. Functionally, ruBisCO catalyzes two reactions: the carboxylation of D-ribulose 1,5-bisphosphate, the primary event in carbon dioxide fixation, as well as the oxidative fragmentation of the pentose substrate. Both reactions occur simultaneously and in competition at the same active site. Although the small subunit is not catalytic it is essential for maximal activity. The chain is Ribulose bisphosphate carboxylase small subunit, chloroplastic 2 from Lemna gibba (Swollen duckweed).